We begin with the raw amino-acid sequence, 932 residues long: DNA mismatch repair protein MutS (932 aa).

Residue 615-622 (GPNMAGKS) participates in ATP binding.

This sequence belongs to the DNA mismatch repair MutS family.

Functionally, this protein is involved in the repair of mismatches in DNA. It is possible that it carries out the mismatch recognition step. This protein has a weak ATPase activity. The chain is DNA mismatch repair protein MutS from Clostridium botulinum (strain Loch Maree / Type A3).